The sequence spans 436 residues: Glutamyl-tRNA(Gln) amidotransferase subunit D (436 aa).

Positions Gln-91–Asn-420 constitute an Asparaginase/glutaminase domain. Catalysis depends on residues Thr-101, Thr-177, Asp-178, and Lys-254.

This sequence belongs to the asparaginase 1 family. GatD subfamily. In terms of assembly, heterodimer of GatD and GatE.

It carries out the reaction L-glutamyl-tRNA(Gln) + L-glutamine + ATP + H2O = L-glutaminyl-tRNA(Gln) + L-glutamate + ADP + phosphate + H(+). Its function is as follows. Allows the formation of correctly charged Gln-tRNA(Gln) through the transamidation of misacylated Glu-tRNA(Gln) in organisms which lack glutaminyl-tRNA synthetase. The reaction takes place in the presence of glutamine and ATP through an activated gamma-phospho-Glu-tRNA(Gln). The GatDE system is specific for glutamate and does not act on aspartate. The chain is Glutamyl-tRNA(Gln) amidotransferase subunit D from Methanobrevibacter smithii (strain ATCC 35061 / DSM 861 / OCM 144 / PS).